An 898-amino-acid polypeptide reads, in one-letter code: Aconitate hydratase 1 (898 aa).

N-acetylalanine is present on alanine 2. Substrate contacts are provided by residues glutamine 90 and 209–211; that span reads DSH. 3 residues coordinate [4Fe-4S] cluster: cysteine 441, cysteine 507, and cysteine 510. Residues arginine 540, arginine 545, arginine 703, and 784-785 each bind substrate; that span reads SR.

The protein belongs to the aconitase/IPM isomerase family. In terms of assembly, monomer. [4Fe-4S] cluster serves as cofactor. Mostly expressed in roots, stems and leaves, also present in stems and flowers.

The protein localises to the cytoplasm. It localises to the mitochondrion. It carries out the reaction citrate = D-threo-isocitrate. It functions in the pathway carbohydrate metabolism; tricarboxylic acid cycle; isocitrate from oxaloacetate: step 2/2. Functionally, catalyzes the isomerization of citrate to isocitrate via cis-aconitate. Contributes to oxidative stress tolerance. May have a role in respiration. This chain is Aconitate hydratase 1, found in Arabidopsis thaliana (Mouse-ear cress).